We begin with the raw amino-acid sequence, 324 residues long: Protein translocase subunit SecF (324 aa).

Helical transmembrane passes span 16–36, 145–165, 174–194, 201–221, 247–269, and 276–295; these read FFWA…ASLV, LIRS…VYIW, LGSV…FALF, TTVA…VVVF, TLSR…LVFG, and FVFA…VYMA.

This sequence belongs to the SecD/SecF family. SecF subfamily. As to quaternary structure, forms a complex with SecD. Part of the essential Sec protein translocation apparatus which comprises SecA, SecYEG and auxiliary proteins SecDF-YajC and YidC.

It localises to the cell inner membrane. In terms of biological role, part of the Sec protein translocase complex. Interacts with the SecYEG preprotein conducting channel. SecDF uses the proton motive force (PMF) to complete protein translocation after the ATP-dependent function of SecA. The chain is Protein translocase subunit SecF from Cereibacter sphaeroides (strain ATCC 17023 / DSM 158 / JCM 6121 / CCUG 31486 / LMG 2827 / NBRC 12203 / NCIMB 8253 / ATH 2.4.1.) (Rhodobacter sphaeroides).